Here is a 414-residue protein sequence, read N- to C-terminus: MAKTDKLAQFLDSGIYESDEFNWFFLDTVRITNRSYTRFKVSPSAYYSRFFNSKQLNQHSSESNPKKRKRKQKNSSFHLPSVGEQASNLRHQEARLFLSKAHESFLKEIELLSLTKGLSDDNDDDDSSLLNKCCDDEVSFIELGGVWQAPFYEITLSFNLHCDNEGESCNEQRVFQVFNNLVVNEIGEEVEAEFSNRRYIMPRNSCFYMSDLHHIRNLVPAKSEEGYNLIVIDPPWENASAHQKSKYPTLPNQYFLSLPIKQLAHAEGALVALWVTNREKLLSFVEKELFPAWGIKYVATMYWLKVKPDGTLICDLDLVHHKPYEYLLLGYHFTELAGSEKRSDFKLLDKNQIIMSIPGDFSRKPPIGDILLKHTPGSQPARCLELFAREMAAGWTSWGNEPLHFQDSRYFLKV.

The disordered stretch occupies residues 56–77 (LNQHSSESNPKKRKRKQKNSSF).

It belongs to the MT-A70-like family.

Functionally, probable methyltransferase. This is Methyltransferase-like protein 2 from Arabidopsis thaliana (Mouse-ear cress).